A 216-amino-acid chain; its full sequence is Ribosomal RNA small subunit methyltransferase G (216 aa).

S-adenosyl-L-methionine contacts are provided by residues Gly-82, Leu-87, 135–136, and Arg-148; that span reads AE.

This sequence belongs to the methyltransferase superfamily. RNA methyltransferase RsmG family.

The protein localises to the cytoplasm. It carries out the reaction guanosine(527) in 16S rRNA + S-adenosyl-L-methionine = N(7)-methylguanosine(527) in 16S rRNA + S-adenosyl-L-homocysteine. Functionally, specifically methylates the N7 position of guanine in position 527 of 16S rRNA. The sequence is that of Ribosomal RNA small subunit methyltransferase G from Caulobacter vibrioides (strain ATCC 19089 / CIP 103742 / CB 15) (Caulobacter crescentus).